A 219-amino-acid polypeptide reads, in one-letter code: Mucosal pentraxin (219 aa).

Positions methionine 1–alanine 19 are cleaved as a signal peptide. In terms of domain architecture, Pentraxin (PTX) spans lysine 24–proline 219. The N-linked (GlcNAc...) asparagine glycan is linked to asparagine 51. Cysteine 55 and cysteine 114 are oxidised to a cystine. The Ca(2+) site is built by aspartate 77, asparagine 78, glutamate 155, glutamine 156, aspartate 157, and glutamine 167.

The protein belongs to the pentraxin family. As to quaternary structure, homopentamer. Pentraxin (or pentaxin) have a discoid arrangement of 5 non-covalently bound subunits. It depends on Ca(2+) as a cofactor. Expressed in colon.

It localises to the secreted. In Mus musculus (Mouse), this protein is Mucosal pentraxin (Mptx1).